A 105-amino-acid polypeptide reads, in one-letter code: ATP-dependent Clp protease adapter protein ClpS (105 aa).

Belongs to the ClpS family. As to quaternary structure, binds to the N-terminal domain of the chaperone ClpA.

Its function is as follows. Involved in the modulation of the specificity of the ClpAP-mediated ATP-dependent protein degradation. The chain is ATP-dependent Clp protease adapter protein ClpS from Streptomyces avermitilis (strain ATCC 31267 / DSM 46492 / JCM 5070 / NBRC 14893 / NCIMB 12804 / NRRL 8165 / MA-4680).